The sequence spans 1155 residues: ATP-dependent helicase/deoxyribonuclease subunit B (1155 aa).

Positions Met-1 to Arg-278 constitute a UvrD-like helicase ATP-binding domain. Gly-9–Ser-16 is an ATP binding site. Positions Thr-270 to Val-584 constitute a UvrD-like helicase C-terminal domain. [4Fe-4S] cluster-binding residues include Cys-785, Cys-1112, Cys-1115, and Cys-1121.

It belongs to the helicase family. AddB/RexB type 1 subfamily. As to quaternary structure, heterodimer of AddA and AddB. The cofactor is Mg(2+). [4Fe-4S] cluster serves as cofactor.

In terms of biological role, the heterodimer acts as both an ATP-dependent DNA helicase and an ATP-dependent, dual-direction single-stranded exonuclease. Recognizes the chi site generating a DNA molecule suitable for the initiation of homologous recombination. The AddB subunit has 5' -&gt; 3' nuclease activity but not helicase activity. The sequence is that of ATP-dependent helicase/deoxyribonuclease subunit B from Staphylococcus carnosus (strain TM300).